We begin with the raw amino-acid sequence, 108 residues long: Large ribosomal subunit protein uL24 (108 aa).

The protein belongs to the universal ribosomal protein uL24 family. As to quaternary structure, part of the 50S ribosomal subunit.

In terms of biological role, one of two assembly initiator proteins, it binds directly to the 5'-end of the 23S rRNA, where it nucleates assembly of the 50S subunit. Its function is as follows. One of the proteins that surrounds the polypeptide exit tunnel on the outside of the subunit. This chain is Large ribosomal subunit protein uL24, found in Moorella thermoacetica (strain ATCC 39073 / JCM 9320).